An 82-amino-acid polypeptide reads, in one-letter code: Small ribosomal subunit protein bS16 (82 aa).

This sequence belongs to the bacterial ribosomal protein bS16 family.

The polypeptide is Small ribosomal subunit protein bS16 (Vibrio atlanticus (strain LGP32) (Vibrio splendidus (strain Mel32))).